Here is a 166-residue protein sequence, read N- to C-terminus: NAD(P)H-quinone oxidoreductase subunit I, chloroplastic (166 aa).

4Fe-4S ferredoxin-type domains follow at residues G55–K84 and L95–E124. [4Fe-4S] cluster is bound by residues C64, C67, C70, C74, C104, C107, C110, and C114.

Belongs to the complex I 23 kDa subunit family. As to quaternary structure, NDH is composed of at least 16 different subunits, 5 of which are encoded in the nucleus. [4Fe-4S] cluster serves as cofactor.

Its subcellular location is the plastid. It is found in the chloroplast thylakoid membrane. The catalysed reaction is a plastoquinone + NADH + (n+1) H(+)(in) = a plastoquinol + NAD(+) + n H(+)(out). The enzyme catalyses a plastoquinone + NADPH + (n+1) H(+)(in) = a plastoquinol + NADP(+) + n H(+)(out). Functionally, NDH shuttles electrons from NAD(P)H:plastoquinone, via FMN and iron-sulfur (Fe-S) centers, to quinones in the photosynthetic chain and possibly in a chloroplast respiratory chain. The immediate electron acceptor for the enzyme in this species is believed to be plastoquinone. Couples the redox reaction to proton translocation, and thus conserves the redox energy in a proton gradient. The protein is NAD(P)H-quinone oxidoreductase subunit I, chloroplastic of Silphium perfoliatum (Cup plant).